Consider the following 483-residue polypeptide: tRNA sulfurtransferase (483 aa).

The region spanning 62–166 (PEICDALTRI…QDKLILVKAR (105 aa)) is the THUMP domain. ATP is bound by residues 184-185 (LI), lysine 266, glycine 288, and glutamine 297. Cysteine 345 and cysteine 457 are oxidised to a cystine. The 79-residue stretch at 405 to 483 (LADTDVLLDI…GYTNVKVYRP (79 aa)) folds into the Rhodanese domain. The Cysteine persulfide intermediate role is filled by cysteine 457.

It belongs to the ThiI family.

It localises to the cytoplasm. It catalyses the reaction [ThiI sulfur-carrier protein]-S-sulfanyl-L-cysteine + a uridine in tRNA + 2 reduced [2Fe-2S]-[ferredoxin] + ATP + H(+) = [ThiI sulfur-carrier protein]-L-cysteine + a 4-thiouridine in tRNA + 2 oxidized [2Fe-2S]-[ferredoxin] + AMP + diphosphate. The enzyme catalyses [ThiS sulfur-carrier protein]-C-terminal Gly-Gly-AMP + S-sulfanyl-L-cysteinyl-[cysteine desulfurase] + AH2 = [ThiS sulfur-carrier protein]-C-terminal-Gly-aminoethanethioate + L-cysteinyl-[cysteine desulfurase] + A + AMP + 2 H(+). The protein operates within cofactor biosynthesis; thiamine diphosphate biosynthesis. In terms of biological role, catalyzes the ATP-dependent transfer of a sulfur to tRNA to produce 4-thiouridine in position 8 of tRNAs, which functions as a near-UV photosensor. Also catalyzes the transfer of sulfur to the sulfur carrier protein ThiS, forming ThiS-thiocarboxylate. This is a step in the synthesis of thiazole, in the thiamine biosynthesis pathway. The sulfur is donated as persulfide by IscS. The protein is tRNA sulfurtransferase of Yersinia pseudotuberculosis serotype O:1b (strain IP 31758).